Consider the following 372-residue polypeptide: MAFKYLLPLLLLSLLVANCASRPLYRLPSEAKHATKKPLQTSRPYNLAHRGSNGELPEETAPAYMRAIEEGADFIETDILSSKDGVLICHHDVNLDDTTDVADHKEFADRKRTYEVQGMNMTGFFTVDFTLKELKTLGAKQRYPFRDQQYNGKFPIITFDEYISIALDAPRVVGIYPEIKNPVFMNQQVKWADGKKFEDKFVETLKKYGYKGSYLSEDWLKQPIFIQSFAATSLVYISNMTDSPKLFLIDDVTILTEDTNKTYAEITSDAYLDYIKPYVIGIGPWKDTIVPVNNNRLMTPTDLVARAHSRNLQVHPYTYRNENQFLHLEFNQDPYLEYDYWLNKIGVDGLFTDFTGSLHNYQELKSPLPQQQ.

Residues 1–21 form the signal peptide; sequence MAFKYLLPLLLLSLLVANCAS. Residues 32 to 58 are disordered; it reads KHATKKPLQTSRPYNLAHRGSNGELPE. Residues 44–362 form the GP-PDE domain; the sequence is PYNLAHRGSN…DFTGSLHNYQ (319 aa). N-linked (GlcNAc...) asparagine glycosylation is found at asparagine 120, asparagine 239, and asparagine 260.

Belongs to the glycerophosphoryl diester phosphodiesterase family. In terms of tissue distribution, expressed in flowers and siliques.

The catalysed reaction is a sn-glycero-3-phosphodiester + H2O = an alcohol + sn-glycerol 3-phosphate + H(+). In Arabidopsis thaliana (Mouse-ear cress), this protein is Glycerophosphodiester phosphodiesterase GDPD6.